We begin with the raw amino-acid sequence, 371 residues long: Probable protein phosphatase 2C 11 (371 aa).

Residues 29 to 49 traverse the membrane as a helical segment; that stretch reads FFFFLFNSQTISSFIIFYLFL. The tract at residues 67-95 is disordered; the sequence is PPLSVAPLRGDANSPPPESSSSPATKSSL. The segment covering 85–94 has biased composition (low complexity); the sequence is SSSSPATKSS. The 246-residue stretch at 123-368 folds into the PPM-type phosphatase domain; the sequence is SYGYSSLKGK…DNITCIVVRF (246 aa). Asp-159, Gly-160, Asp-320, and Asp-359 together coordinate Mn(2+).

This sequence belongs to the PP2C family. Mg(2+) serves as cofactor. It depends on Mn(2+) as a cofactor.

The protein resides in the membrane. It carries out the reaction O-phospho-L-seryl-[protein] + H2O = L-seryl-[protein] + phosphate. It catalyses the reaction O-phospho-L-threonyl-[protein] + H2O = L-threonyl-[protein] + phosphate. This is Probable protein phosphatase 2C 11 from Arabidopsis thaliana (Mouse-ear cress).